The sequence spans 483 residues: Bifunctional pantoate ligase/cytidylate kinase (483 aa).

The segment at 1–246 is pantoate--beta-alanine ligase; it reads MPTMGALHAG…CGSTRLIDHA (246 aa). 4–11 provides a ligand contact to ATP; sequence MGALHAGH. H11 functions as the Proton donor in the catalytic mechanism. Residue Q34 coordinates (R)-pantoate. Q34 contributes to the beta-alanine binding site. 124 to 127 lines the ATP pocket; it reads GEKD. Q130 lines the (R)-pantoate pocket. ATP is bound by residues V153 and 161–164; that span reads LSSR. A cytidylate kinase region spans residues 247 to 483; that stretch reads FLMTRQPLVA…AEEAWPTPQR (237 aa).

The protein in the N-terminal section; belongs to the pantothenate synthetase family. In the C-terminal section; belongs to the cytidylate kinase family. Type 1 subfamily.

The protein resides in the cytoplasm. The enzyme catalyses (R)-pantoate + beta-alanine + ATP = (R)-pantothenate + AMP + diphosphate + H(+). The catalysed reaction is CMP + ATP = CDP + ADP. It catalyses the reaction dCMP + ATP = dCDP + ADP. It participates in cofactor biosynthesis; (R)-pantothenate biosynthesis; (R)-pantothenate from (R)-pantoate and beta-alanine: step 1/1. In terms of biological role, catalyzes the condensation of pantoate with beta-alanine in an ATP-dependent reaction via a pantoyl-adenylate intermediate. Catalyzes the transfer of a phosphate group from ATP to either CMP or dCMP to form CDP or dCDP and ADP, respectively. This is Bifunctional pantoate ligase/cytidylate kinase from Synechococcus sp. (strain CC9902).